The sequence spans 215 residues: Calcium-binding protein 7 (215 aa).

Over 1–188 (MPFHPVTAAL…QIRQTCVRKS (188 aa)) the chain is Cytoplasmic. 2 consecutive EF-hand domains span residues 33–68 (DELEEIREAFKVFDRDGNGFISKQELGTAMRSLGYM) and 69–104 (PNEVELEVIIQRLDMDGDGQVDFEEFVTLLGPKLST). The Ca(2+) site is built by aspartate 46, aspartate 48, asparagine 50, glutamate 57, aspartate 82, aspartate 84, aspartate 86, glutamine 88, and glutamate 93. Residues 189–209 (LICAFAIAFIISVMLIAANQV) form a helical; Anchor for type IV membrane protein membrane-spanning segment. Residues 210 to 215 (LRSGMK) lie on the Extracellular side of the membrane.

In terms of assembly, interacts with PI4KB. This binding competes with FREQ/NCS1 binding in a calcium-dependent manner.

The protein localises to the golgi apparatus. The protein resides in the trans-Golgi network membrane. It localises to the cytoplasm. Its subcellular location is the perinuclear region. It is found in the cell membrane. Its function is as follows. Negatively regulates Golgi-to-plasma membrane trafficking by interacting with PI4KB and inhibiting its activity. The polypeptide is Calcium-binding protein 7 (CABP7) (Homo sapiens (Human)).